The primary structure comprises 423 residues: Kynureninase (423 aa).

Pyridoxal 5'-phosphate is bound by residues L105, S106, F133–D136, D218, H221, and Y243. K244 bears the N6-(pyridoxal phosphate)lysine mark. The pyridoxal 5'-phosphate site is built by W273 and N301.

Belongs to the kynureninase family. Homodimer. Pyridoxal 5'-phosphate serves as cofactor.

The enzyme catalyses L-kynurenine + H2O = anthranilate + L-alanine + H(+). It catalyses the reaction 3-hydroxy-L-kynurenine + H2O = 3-hydroxyanthranilate + L-alanine + H(+). Its pathway is amino-acid degradation; L-kynurenine degradation; L-alanine and anthranilate from L-kynurenine: step 1/1. The protein operates within cofactor biosynthesis; NAD(+) biosynthesis; quinolinate from L-kynurenine: step 2/3. In terms of biological role, catalyzes the cleavage of L-kynurenine (L-Kyn) and L-3-hydroxykynurenine (L-3OHKyn) into anthranilic acid (AA) and 3-hydroxyanthranilic acid (3-OHAA), respectively. The protein is Kynureninase of Xanthomonas oryzae pv. oryzae (strain MAFF 311018).